A 711-amino-acid chain; its full sequence is Mitochondrial intermediate peptidase (711 aa).

The N-terminal 33 residues, 1–33 (MLLAAGARYARRLCGRGAAAALQGRTGRSCARD), are a transit peptide targeting the mitochondrion. Lysine 124 is modified (N6-acetyllysine). Histidine 493 serves as a coordination point for Zn(2+). Glutamate 494 is a catalytic residue. The Zn(2+) site is built by histidine 497 and histidine 500.

The protein belongs to the peptidase M3 family. As to quaternary structure, monomer. Zn(2+) is required as a cofactor.

It is found in the mitochondrion matrix. The enzyme catalyses Release of an N-terminal octapeptide as second stage of processing of some proteins imported into the mitochondrion.. Activity is divalent cation-dependent. It is stimulated by manganese, magnesium or calcium ions and reversibly inhibited by zinc, cobalt and iron. Functionally, cleaves proteins, imported into the mitochondrion, to their mature size. This Mus musculus (Mouse) protein is Mitochondrial intermediate peptidase (Mipep).